We begin with the raw amino-acid sequence, 412 residues long: Gamma-glutamyl phosphate reductase (412 aa).

The protein belongs to the gamma-glutamyl phosphate reductase family.

The protein localises to the cytoplasm. It catalyses the reaction L-glutamate 5-semialdehyde + phosphate + NADP(+) = L-glutamyl 5-phosphate + NADPH + H(+). It participates in amino-acid biosynthesis; L-proline biosynthesis; L-glutamate 5-semialdehyde from L-glutamate: step 2/2. Catalyzes the NADPH-dependent reduction of L-glutamate 5-phosphate into L-glutamate 5-semialdehyde and phosphate. The product spontaneously undergoes cyclization to form 1-pyrroline-5-carboxylate. The polypeptide is Gamma-glutamyl phosphate reductase (Bartonella henselae (strain ATCC 49882 / DSM 28221 / CCUG 30454 / Houston 1) (Rochalimaea henselae)).